A 352-amino-acid polypeptide reads, in one-letter code: N-acetyl-gamma-glutamyl-phosphate reductase (352 aa).

Residue Cys-155 is part of the active site.

Belongs to the NAGSA dehydrogenase family. Type 1 subfamily.

Its subcellular location is the cytoplasm. It carries out the reaction N-acetyl-L-glutamate 5-semialdehyde + phosphate + NADP(+) = N-acetyl-L-glutamyl 5-phosphate + NADPH + H(+). The protein operates within amino-acid biosynthesis; L-arginine biosynthesis; N(2)-acetyl-L-ornithine from L-glutamate: step 3/4. Its function is as follows. Catalyzes the NADPH-dependent reduction of N-acetyl-5-glutamyl phosphate to yield N-acetyl-L-glutamate 5-semialdehyde. The polypeptide is N-acetyl-gamma-glutamyl-phosphate reductase (Brachyspira hyodysenteriae (strain ATCC 49526 / WA1)).